Consider the following 154-residue polypeptide: Protein X (154 aa).

Residues 68-117 (PCALRFTSARRMETTVNAHQVLPKVLYKRTLGLSAMSTTDLEAYFKDCLF) are mitochondrial targeting sequence.

The protein belongs to the orthohepadnavirus protein X family. May form homodimer. May interact with host CEBPA, CFLAR, CREB1, DDB1, E4F1, HBXIP, HSPD1/HSP60, NFKBIA, POLR2E and SMAD4. Interacts with host SMC5-SMC6 complex and induces its degradation. Interacts with host TRPC4AP; leading to prevent ubiquitination of TRPC4AP. Interacts with host PLSCR1; this interaction promotes ubiquitination and degradation of HBx and impairs HBx-mediated cell proliferation. Post-translationally, a fraction may be phosphorylated in insect cells and HepG2 cells, a human hepatoblastoma cell line. Phosphorylated in vitro by host protein kinase C or mitogen-activated protein kinase. N-acetylated in insect cells.

Its subcellular location is the host cytoplasm. It localises to the host nucleus. The protein localises to the host mitochondrion. Multifunctional protein that plays a role in silencing host antiviral defenses and promoting viral transcription. Does not seem to be essential for HBV infection. May be directly involved in development of cirrhosis and liver cancer (hepatocellular carcinoma). Most of cytosolic activities involve modulation of cytosolic calcium. The effect on apoptosis is controversial depending on the cell types in which the studies have been conducted. May induce apoptosis by localizing in mitochondria and causing loss of mitochondrial membrane potential. May also modulate apoptosis by binding host CFLAR, a key regulator of the death-inducing signaling complex (DISC). Promotes viral transcription by using the host E3 ubiquitin ligase DDB1 to target the SMC5-SMC6 complex to proteasomal degradation. This host complex would otherwise bind to viral episomal DNA, and prevents its transcription. Moderately stimulates transcription of many different viral and cellular transcription elements. Promoters and enhancers stimulated by HBx contain DNA binding sites for NF-kappa-B, AP-1, AP-2, c-EBP, ATF/CREB, or the calcium-activated factor NF-AT. This Homo sapiens (Human) protein is Protein X.